The chain runs to 710 residues: MSTILIFIAALLACSLLAIWRFRVKSRRGSLPWFSAFQDAQTRKLLPEERSAVENYLDNLSQIQQVPGPTGASAAPISLTLNAESNSVVILTHSITRYGITTDDPNKWRYYLDSVEVHLPPFWEQYINDENNVELILTDTLPLVISLNGHTLQEYMQESRGYALQNTASTQASIRGEESEQIELLNIRQETHEEYALSRPAGLREALLIVASFLLFFFCLITPDVFVPWMIGGAILLLAAGLWGLFAPPSKSALREIHCLRGTPRRWGLFGENNQEQINNISLGIIDLIYPAHWQPYITQDLGQQTDIDIYLDRHVARQGRFLSLHDEVKNFPLQHWLRSTVIAIGSLLVLFMLLFWIPLDMPIKFTLSWMKGAQTIEATTVKQLEKAGVRVGDTLHLSGKGMCNIHSGATWSGQSNSPFMPFDCSQIIWNDAPALPLPESDLVNKAMALSQAVNRQLHPKPEDDSRVSASLRSAIQKSGMVLLDDFGDIVLKTADLCAAEDECVRLKNALVNLGNSKDWNALVKRANAGKLDGVNVLLRPVSAESLENLVTTSTAPFISRETARAAQSLNSPAPGGFLIASDEGSELVDQAWPSTPLYDYPAQEQWSAFQRLAQTLMQTPFSAEGIVTSVYTDANGTQHISLHRIPDKSGWWRYLGTTLLMLAMIVSAVYNGIQAFRRYQRHRTRMADIQEYYESCLNPRLTVSPENLI.

A topological domain (periplasmic) is located at residue Met1. The helical transmembrane segment at 2–22 threads the bilayer; the sequence is STILIFIAALLACSLLAIWRF. Over 23–204 the chain is Cytoplasmic; the sequence is RVKSRRGSLP…YALSRPAGLR (182 aa). Helical transmembrane passes span 205–225 and 226–246; these read EALL…TPDV and FVPW…WGLF. Residues 247–339 are Cytoplasmic-facing; sequence APPSKSALRE…KNFPLQHWLR (93 aa). The chain crosses the membrane as a helical span at residues 340–360; sequence STVIAIGSLLVLFMLLFWIPL. The Periplasmic segment spans residues 361–656; it reads DMPIKFTLSW…PDKSGWWRYL (296 aa). A helical membrane pass occupies residues 657-677; it reads GTTLLMLAMIVSAVYNGIQAF. The Cytoplasmic portion of the chain corresponds to 678–710; that stretch reads RRYQRHRTRMADIQEYYESCLNPRLTVSPENLI.

This sequence belongs to the IgaA family.

It localises to the cell inner membrane. The polypeptide is Putative membrane protein IgaA homolog (yrfF) (Salmonella typhi).